Here is a 350-residue protein sequence, read N- to C-terminus: DNA polymerase IV (350 aa).

The UmuC domain maps to 4-185; that stretch reads IIHIDMDCFY…LPLGKLPGIG (182 aa). 2 residues coordinate Mg(2+): aspartate 8 and aspartate 103. Glutamate 104 is an active-site residue.

This sequence belongs to the DNA polymerase type-Y family. As to quaternary structure, monomer. Requires Mg(2+) as cofactor.

It is found in the cytoplasm. The enzyme catalyses DNA(n) + a 2'-deoxyribonucleoside 5'-triphosphate = DNA(n+1) + diphosphate. Its function is as follows. Poorly processive, error-prone DNA polymerase involved in untargeted mutagenesis. Copies undamaged DNA at stalled replication forks, which arise in vivo from mismatched or misaligned primer ends. These misaligned primers can be extended by PolIV. Exhibits no 3'-5' exonuclease (proofreading) activity. May be involved in translesional synthesis, in conjunction with the beta clamp from PolIII. This is DNA polymerase IV from Aeromonas hydrophila subsp. hydrophila (strain ATCC 7966 / DSM 30187 / BCRC 13018 / CCUG 14551 / JCM 1027 / KCTC 2358 / NCIMB 9240 / NCTC 8049).